A 200-amino-acid polypeptide reads, in one-letter code: Small ribosomal subunit protein uS4 (200 aa).

The tract at residues 22–42 is disordered; it reads TGKELEKRPYAPGPHGPGQRK. The 64-residue stretch at 92 to 155 folds into the S4 RNA-binding domain; sequence ARLDNVVYKL…RNLSIIKESV (64 aa).

It belongs to the universal ribosomal protein uS4 family. In terms of assembly, part of the 30S ribosomal subunit. Contacts protein S5. The interaction surface between S4 and S5 is involved in control of translational fidelity.

Functionally, one of the primary rRNA binding proteins, it binds directly to 16S rRNA where it nucleates assembly of the body of the 30S subunit. With S5 and S12 plays an important role in translational accuracy. The protein is Small ribosomal subunit protein uS4 of Bacillus velezensis (strain DSM 23117 / BGSC 10A6 / LMG 26770 / FZB42) (Bacillus amyloliquefaciens subsp. plantarum).